The sequence spans 23 residues: Unknown protein 1 (23 aa).

The sequence is that of Unknown protein 1 from Coniferiporia sulphurascens (Laminated root rot fungus).